Reading from the N-terminus, the 427-residue chain is Flotillin-1 (427 aa).

Residues Ser-19, Ser-163, and Ser-385 each carry the phosphoserine modification. The residue at position 387 (Thr-387) is a Phosphothreonine.

It belongs to the band 7/mec-2 family. Flotillin subfamily. Heterooligomeric complex of flotillin-1 and flotillin-2 and caveolin-1 and caveolin-2. Interacts with ECPAS.

The protein localises to the cell membrane. It localises to the endosome. It is found in the membrane. Its subcellular location is the caveola. The protein resides in the melanosome. The protein localises to the membrane raft. May act as a scaffolding protein within caveolar membranes, functionally participating in formation of caveolae or caveolae-like vesicles. This chain is Flotillin-1 (FLOT1), found in Macaca mulatta (Rhesus macaque).